The primary structure comprises 154 residues: Large ribosomal subunit protein uL23 (154 aa).

This sequence belongs to the universal ribosomal protein uL23 family.

In terms of biological role, this protein binds to a specific region on the 26S rRNA. This chain is Large ribosomal subunit protein uL23 (RPL23A), found in Daucus carota (Wild carrot).